We begin with the raw amino-acid sequence, 490 residues long: Glutathione reductase (490 aa).

Positions 19 and 20 each coordinate FAD. Residue Ser19 participates in glutathione binding. Arg26 is a binding site for glutathione. FAD is bound by residues Glu39, Thr48, Cys49, and Lys57. Cys49 and Cys54 are oxidised to a cystine. Tyr110 lines the glutathione pocket. An FAD-binding site is contributed by Ala126. NADP(+) contacts are provided by Ala208, Ile211, Glu214, Arg231, and Arg237. Ser246 lines the glutathione pocket. Gly297 lines the NADP(+) pocket. Asp337 serves as a coordination point for FAD. Glu343 lines the NADP(+) pocket. Position 345 (Thr345) interacts with FAD. Arg353 is a binding site for glutathione. Position 379 (Val379) interacts with NADP(+). Lys432 is a glutathione binding site. His479 is an FAD binding site. The active-site Proton acceptor is the His479.

Belongs to the class-I pyridine nucleotide-disulfide oxidoreductase family. As to quaternary structure, homodimer. The cofactor is FAD.

It localises to the cytoplasm. Its subcellular location is the mitochondrion. It catalyses the reaction 2 glutathione + NADP(+) = glutathione disulfide + NADPH + H(+). In terms of biological role, catalyzes the reduction of glutathione disulfide (GSSG) to reduced glutathione (GSH). Constitutes the major mechanism to maintain a high GSH:GSSG ratio in the cytosol. The chain is Glutathione reductase (GLR1) from Debaryomyces hansenii (strain ATCC 36239 / CBS 767 / BCRC 21394 / JCM 1990 / NBRC 0083 / IGC 2968) (Yeast).